The primary structure comprises 544 residues: Chaperonin GroEL (544 aa).

ATP contacts are provided by residues 30–33 (TLGP), Lys51, 87–91 (DGTTT), Gly415, and Asp495.

It belongs to the chaperonin (HSP60) family. As to quaternary structure, forms a cylinder of 14 subunits composed of two heptameric rings stacked back-to-back. Interacts with the co-chaperonin GroES.

It is found in the cytoplasm. It catalyses the reaction ATP + H2O + a folded polypeptide = ADP + phosphate + an unfolded polypeptide.. In terms of biological role, together with its co-chaperonin GroES, plays an essential role in assisting protein folding. The GroEL-GroES system forms a nano-cage that allows encapsulation of the non-native substrate proteins and provides a physical environment optimized to promote and accelerate protein folding. The polypeptide is Chaperonin GroEL (Neisseria gonorrhoeae (strain ATCC 700825 / FA 1090)).